The sequence spans 414 residues: Hydroxysqualene dehydroxylase (414 aa).

It belongs to the HpnE family.

The enzyme catalyses squalene + FAD + H2O + H(+) = hydroxysqualene + FADH2. It participates in secondary metabolite biosynthesis; hopanoid biosynthesis. Involved in the biosynthesis of the hopanoid precursor squalene (SQ) from farnesyl diphosphate (FPP). Catalyzes the third (last) step, the reduction of hydroxysqualene (HSQ) to SQ. The sequence is that of Hydroxysqualene dehydroxylase from Zymomonas mobilis subsp. mobilis (strain ATCC 31821 / ZM4 / CP4).